The chain runs to 120 residues: Transcription elongation factor SPT4 (120 aa).

Positions 1 to 39 (MSASVPADLRNLRACLLCSLVKSVESFQKEGCENCEDVL) are interaction with spt-5. The segment at 15–35 (CLLCSLVKSVESFQKEGCENC) adopts a C4-type zinc-finger fold.

It belongs to the SPT4 family. In terms of assembly, interacts with spt-5 to form DSIF. DSIF interacts with RNA polymerase II and with the positive transcription elongation factor b complex (P-TEFb complex), which is composed of cdk-9 and cyclin-T (cit-1.1 or cit-1.2).

It is found in the nucleus. Functionally, may function as a component of the DRB sensitivity-inducing factor complex (DSIF complex), which regulates transcription elongation by RNA polymerase II. DSIF may enhance transcriptional pausing at sites proximal to the promoter, which may in turn facilitate the assembly of an elongation competent RNA polymerase II complex. The sequence is that of Transcription elongation factor SPT4 (spt-4) from Caenorhabditis elegans.